The primary structure comprises 220 residues: Protein-methionine-sulfoxide reductase heme-binding subunit MsrQ (220 aa).

Helical transmembrane passes span 20-40 (LWLLYTAGFVPAVWTFYLGAT), 51-71 (FEHLLGLWALRFLILTLLVTP), 86-106 (ALGLLAFYYALMHFTTYMVLD), 122-142 (PFITIGMISLALLVPLALTSN), 153-173 (WSSLHKLVYIAIAGSAVHFLM), and 175-195 (VKSWPAEPVIYAAIVAALLLW).

This sequence belongs to the MsrQ family. In terms of assembly, heterodimer of a catalytic subunit (MsrP) and a heme-binding subunit (MsrQ). FMN is required as a cofactor. The cofactor is heme b.

It is found in the cell inner membrane. Its function is as follows. Part of the MsrPQ system that repairs oxidized periplasmic proteins containing methionine sulfoxide residues (Met-O), using respiratory chain electrons. Thus protects these proteins from oxidative-stress damage caused by reactive species of oxygen and chlorine generated by the host defense mechanisms. MsrPQ is essential for the maintenance of envelope integrity under bleach stress, rescuing a wide series of structurally unrelated periplasmic proteins from methionine oxidation. MsrQ provides electrons for reduction to the reductase catalytic subunit MsrP, using the quinone pool of the respiratory chain. This is Protein-methionine-sulfoxide reductase heme-binding subunit MsrQ from Brucella melitensis biotype 2 (strain ATCC 23457).